The following is a 462-amino-acid chain: Hydroxymethylglutaryl-CoA synthase (462 aa).

The active-site Proton donor/acceptor is the E86. C120 acts as the Acyl-thioester intermediate in catalysis. C120, T211, H261, K270, N338, and S372 together coordinate (3S)-3-hydroxy-3-methylglutaryl-CoA. Catalysis depends on H261, which acts as the Proton donor/acceptor.

The protein belongs to the thiolase-like superfamily. HMG-CoA synthase family.

It catalyses the reaction acetoacetyl-CoA + acetyl-CoA + H2O = (3S)-3-hydroxy-3-methylglutaryl-CoA + CoA + H(+). Its pathway is siderophore biosynthesis. Its function is as follows. Hydroxymethylglutaryl-CoA synthase involved in the biosynthesis of siderophore ferrichrome A which is contributing to organismal virulence. The first step of ferrichrome A biosynthesis is performed by the HMG-CoA synthase hcs1 which catalyzes the generation of HMG-CoA and CoA using acetoacetyl-CoA and acetyl-CoA as substrates. The enoyl-CoA isomerase/hydratase fer4 then catalyzes the conversion of hcs1-produced HMG-CoA to methylglutaconyl-CoA. The acyltransferase fer5 then fuses the fer4-generated methylglutaconyl-CoA with sid1-generated hydroxyornithine to yield methylglutaconyl hydroxyornithine. Methylglutaconyl hydroxyornithine is then available for use by the NRPS fer3 to generate ferrichrome A. This Mycosarcoma maydis (Corn smut fungus) protein is Hydroxymethylglutaryl-CoA synthase.